Reading from the N-terminus, the 449-residue chain is Biotin carboxylase (449 aa).

One can recognise a Biotin carboxylation domain in the interval 1–445 (MLEKVLIANR…NIHYLEKKLG (445 aa)). ATP is bound by residues Lys-116, Lys-159, 165–166 (GG), 201–204 (EKFL), His-209, and His-236. The region spanning 120–317 (KDAMKRAGVP…IVKEMLRIAS (198 aa)) is the ATP-grasp domain. Lys-238 contributes to the hydrogencarbonate binding site. ATP contacts are provided by Glu-276 and Glu-288. Residues Glu-276, Glu-288, and Asn-290 each contribute to the Mg(2+) site. Residues Glu-276, Glu-288, and Asn-290 each contribute to the Mn(2+) site. Positions 292, 295, and 338 each coordinate hydrogencarbonate. The active site involves Arg-292. Residue Arg-338 participates in biotin binding.

As to quaternary structure, acetyl-CoA carboxylase is a heterohexamer of biotin carboxyl carrier protein, biotin carboxylase and the two subunits of carboxyl transferase in a 2:2 complex. Mg(2+) serves as cofactor. It depends on Mn(2+) as a cofactor.

It carries out the reaction N(6)-biotinyl-L-lysyl-[protein] + hydrogencarbonate + ATP = N(6)-carboxybiotinyl-L-lysyl-[protein] + ADP + phosphate + H(+). The protein operates within lipid metabolism; malonyl-CoA biosynthesis; malonyl-CoA from acetyl-CoA: step 1/1. Functionally, this protein is a component of the acetyl coenzyme A carboxylase complex; first, biotin carboxylase catalyzes the carboxylation of the carrier protein and then the transcarboxylase transfers the carboxyl group to form malonyl-CoA. The polypeptide is Biotin carboxylase (accC) (Pseudomonas aeruginosa (strain ATCC 15692 / DSM 22644 / CIP 104116 / JCM 14847 / LMG 12228 / 1C / PRS 101 / PAO1)).